We begin with the raw amino-acid sequence, 403 residues long: Putative glutamate--cysteine ligase 2 (403 aa).

The tract at residues 370-403 (ESAAQRRAPQAARRRIRASSEPLGPMSMWPERLH) is disordered.

This sequence belongs to the glutamate--cysteine ligase type 2 family. YbdK subfamily.

It carries out the reaction L-cysteine + L-glutamate + ATP = gamma-L-glutamyl-L-cysteine + ADP + phosphate + H(+). Its function is as follows. ATP-dependent carboxylate-amine ligase which exhibits weak glutamate--cysteine ligase activity. The protein is Putative glutamate--cysteine ligase 2 of Bordetella avium (strain 197N).